A 117-amino-acid polypeptide reads, in one-letter code: Ubiquitin-like protein 3 (117 aa).

Positions 10 to 88 constitute a Ubiquitin-like domain; sequence INLRLILVSG…PFGKTTVMHL (79 aa). Cys113 carries the S-palmitoyl cysteine lipid modification. Cys114 carries the post-translational modification Cysteine methyl ester. Cys114 carries the S-geranylgeranyl cysteine lipid modification. Positions 115–117 are cleaved as a propeptide — removed in mature form; the sequence is VIL.

It localises to the cell membrane. This Bos taurus (Bovine) protein is Ubiquitin-like protein 3 (UBL3).